The sequence spans 904 residues: Eukaryotic translation initiation factor 3 subunit C (904 aa).

Disordered stretches follow at residues 1–38 (MSRF…EEED) and 156–290 (FRES…TSEK). Polar residues predominate over residues 22-32 (IQRQTAPQFTF). Residues 161-183 (DAADDEDEEEEKKEEEESDDEEA) show a composition bias toward acidic residues. Residues 194–206 (FKKDTVEKVKVEK) are compositionally biased toward basic and acidic residues. Residues 207 to 232 (DDDDSDDSIDWGQDSDSDESSSEEEA) show a composition bias toward acidic residues. Basic and acidic residues predominate over residues 237–247 (IRERFLKRPEK). Over residues 257–272 (KEKKKTKETKDSRKKK) the composition is skewed to basic residues. The PCI domain occupies 636–812 (FHMHINLELL…ETVVLHRSEP (177 aa)). Positions 847–904 (RGGNQGYNRDRQNYRNQNQNRENWNNNRRQDRGNRNRNQNRDREQREQHRVEFEEKAE) are disordered. The segment covering 860–873 (YRNQNQNRENWNNN) has biased composition (low complexity). Residues 874–904 (RRQDRGNRNRNQNRDREQREQHRVEFEEKAE) are compositionally biased toward basic and acidic residues.

This sequence belongs to the eIF-3 subunit C family. As to quaternary structure, component of the eukaryotic translation initiation factor 3 (eIF-3) complex.

It localises to the cytoplasm. In terms of biological role, component of the eukaryotic translation initiation factor 3 (eIF-3) complex, which is involved in protein synthesis of a specialized repertoire of mRNAs and, together with other initiation factors, stimulates binding of mRNA and methionyl-tRNAi to the 40S ribosome. The eIF-3 complex specifically targets and initiates translation of a subset of mRNAs involved in cell proliferation. In Culex quinquefasciatus (Southern house mosquito), this protein is Eukaryotic translation initiation factor 3 subunit C.